The chain runs to 380 residues: Queuine tRNA-ribosyltransferase (380 aa).

The active-site Proton acceptor is aspartate 96. Substrate contacts are provided by residues 96 to 100, aspartate 150, glutamine 193, and glycine 220; that span reads DSGGF. The interval 251–257 is RNA binding; that stretch reads GVGAPDS. Catalysis depends on aspartate 270, which acts as the Nucleophile. The tract at residues 275–279 is RNA binding; important for wobble base 34 recognition; that stretch reads TRIAR. Positions 308, 310, 313, and 339 each coordinate Zn(2+).

The protein belongs to the queuine tRNA-ribosyltransferase family. As to quaternary structure, homodimer. Within each dimer, one monomer is responsible for RNA recognition and catalysis, while the other monomer binds to the replacement base PreQ1. The cofactor is Zn(2+).

It carries out the reaction 7-aminomethyl-7-carbaguanine + guanosine(34) in tRNA = 7-aminomethyl-7-carbaguanosine(34) in tRNA + guanine. The protein operates within tRNA modification; tRNA-queuosine biosynthesis. Catalyzes the base-exchange of a guanine (G) residue with the queuine precursor 7-aminomethyl-7-deazaguanine (PreQ1) at position 34 (anticodon wobble position) in tRNAs with GU(N) anticodons (tRNA-Asp, -Asn, -His and -Tyr). Catalysis occurs through a double-displacement mechanism. The nucleophile active site attacks the C1' of nucleotide 34 to detach the guanine base from the RNA, forming a covalent enzyme-RNA intermediate. The proton acceptor active site deprotonates the incoming PreQ1, allowing a nucleophilic attack on the C1' of the ribose to form the product. After dissociation, two additional enzymatic reactions on the tRNA convert PreQ1 to queuine (Q), resulting in the hypermodified nucleoside queuosine (7-(((4,5-cis-dihydroxy-2-cyclopenten-1-yl)amino)methyl)-7-deazaguanosine). In Streptococcus thermophilus (strain ATCC BAA-250 / LMG 18311), this protein is Queuine tRNA-ribosyltransferase.